Consider the following 1040-residue polypeptide: BEM1-interacting protein 2 (1040 aa).

A disordered region spans residues 1–39 (MSNDREVPTLSQLNTTVSRDKDVSDTLSPDFDSKGSATG). Residues 8–17 (PTLSQLNTTV) are compositionally biased toward polar residues. A phosphoserine mark is found at Ser-18, Ser-24, and Ser-28. In terms of domain architecture, SH3 spans 43-107 (GNFPMYIAIN…PVVFTQKITV (65 aa)). The 65-residue stretch at 266–330 (WSPEEITAYF…FKEIEKIKEA (65 aa)) folds into the SAM domain. 3 disordered regions span residues 365–412 (YRGH…SQEA), 437–478 (VSPR…WQSP), and 491–744 (IDQY…ARPV). A compositionally biased stretch (polar residues) spans 372 to 397 (TSQSLEDLPSQQNFIPTPRNTRNSSA). Residues 444–457 (KPPSYPSPAQPPKS) are compositionally biased toward pro residues. Ser-450 is subject to Phosphoserine. Residues 459-478 (LLNNTRTSPSPAQLYSWQSP) show a composition bias toward polar residues. A compositionally biased stretch (low complexity) spans 495–505 (SSSDSNFNSRS). Phosphoserine occurs at positions 519, 523, and 546. Basic and acidic residues predominate over residues 557–570 (SSDRKSSCSSHEEE). Over residues 573-598 (QETMNTFERPTSSIYADGSTIASISN) the composition is skewed to polar residues. Residues 600–609 (KLAHEKEGKK) are compositionally biased toward basic and acidic residues. Residues 632 to 648 (LKRSSSASRTSSFKKSS) are compositionally biased toward low complexity. Ser-652 bears the Phosphoserine mark. The span at 654–684 (FRQQFTDNAARSSSPEENPITSMPSEKNSSP) shows a compositional bias: polar residues. Residues 690–701 (SSKKSRSKRRSV) show a composition bias toward basic residues. Over residues 702-732 (SAKEAEIFTETVKDDKNKRSASEAIKGETLK) the composition is skewed to basic and acidic residues. Residues 768–887 (DADFSGWMSK…WMAALIKTTI (120 aa)) enclose the PH domain. Over residues 943-957 (QLQQQQHDNNQGQAD) the composition is skewed to low complexity. 2 disordered regions span residues 943 to 986 (QLQQ…NNTT) and 1007 to 1040 (VARNSSMRGTEKKGKFSTEEDYFGDNSKHKTDKI). A compositionally biased stretch (polar residues) spans 973–986 (TISTPNLSSANNTT). Basic and acidic residues predominate over residues 1015–1024 (GTEKKGKFST).

Interacts with BEM1. Interacts with TOS7.

It is found in the bud. The protein localises to the bud neck. Protein involved in bud formation. Functions redundantly with BOI1 to promote the fusion of secretory vesicles with the plasma membrane at sites of polarized growth. Acts as an abscission inhibitor during cytokinesis in response to chromatin bridges. The sequence is that of BEM1-interacting protein 2 from Saccharomyces cerevisiae (strain ATCC 204508 / S288c) (Baker's yeast).